We begin with the raw amino-acid sequence, 347 residues long: GMP reductase (347 aa).

A108–A131 contributes to the NADP(+) binding site. 2 residues coordinate K(+): G181 and G183. The Thioimidate intermediate role is filled by C186. Residue I216–V239 participates in NADP(+) binding.

It belongs to the IMPDH/GMPR family. GuaC type 1 subfamily. Homotetramer.

It catalyses the reaction IMP + NH4(+) + NADP(+) = GMP + NADPH + 2 H(+). Catalyzes the irreversible NADPH-dependent deamination of GMP to IMP. It functions in the conversion of nucleobase, nucleoside and nucleotide derivatives of G to A nucleotides, and in maintaining the intracellular balance of A and G nucleotides. The polypeptide is GMP reductase (Shigella flexneri).